The following is a 250-amino-acid chain: MSPDHGELLYEGKAKRIYATDHPDQVLVEYKNDATAFNAQKKAQLADKGRLNCQISARLFELLEGQGVPSHYLGLAGDTWMLVQRVEVIPLEVVLRNIATGSLCRQTPIAEGTPINPALLDLYYKDDDLGDPLLTEARVRLLGLVDDARQSAIEQLARRINGVLQPFFDGLELQLVDFKLELGLNKAGELLLADEISPDTCRFWDQRSSDTNDRILDKDRFRKDLGGVMEAYGEVLKRVHTACPNPRNCL.

It belongs to the SAICAR synthetase family.

The catalysed reaction is 5-amino-1-(5-phospho-D-ribosyl)imidazole-4-carboxylate + L-aspartate + ATP = (2S)-2-[5-amino-1-(5-phospho-beta-D-ribosyl)imidazole-4-carboxamido]succinate + ADP + phosphate + 2 H(+). Its pathway is purine metabolism; IMP biosynthesis via de novo pathway; 5-amino-1-(5-phospho-D-ribosyl)imidazole-4-carboxamide from 5-amino-1-(5-phospho-D-ribosyl)imidazole-4-carboxylate: step 1/2. This chain is Phosphoribosylaminoimidazole-succinocarboxamide synthase, found in Parasynechococcus marenigrum (strain WH8102).